Reading from the N-terminus, the 28-residue chain is Short cationic peptide-1a (28 aa).

Residue Glu28 is modified to Glutamic acid 1-amide.

Expressed by the venom gland.

The protein resides in the secreted. The sequence is that of Short cationic peptide-1a from Cupiennius salei (American wandering spider).